The primary structure comprises 101 residues: Small ribosomal subunit protein uS14 (101 aa).

The protein belongs to the universal ribosomal protein uS14 family. As to quaternary structure, part of the 30S ribosomal subunit. Contacts proteins S3 and S10.

In terms of biological role, binds 16S rRNA, required for the assembly of 30S particles and may also be responsible for determining the conformation of the 16S rRNA at the A site. This Delftia acidovorans (strain DSM 14801 / SPH-1) protein is Small ribosomal subunit protein uS14.